We begin with the raw amino-acid sequence, 204 residues long: Terpene cyclase ausL (204 aa).

5 consecutive transmembrane segments (helical) span residues 19–39 (LSEM…LAMV), 49–69 (AIAV…AWIY), 75–95 (HWQG…AATL), 114–134 (LVLL…CLAL), and 138–158 (GALG…SAAV).

The protein belongs to the paxB family.

It is found in the membrane. It functions in the pathway secondary metabolite biosynthesis; terpenoid biosynthesis. Its function is as follows. Terpene cyclase; part of the gene cluster B that mediates the biosynthesis of austinol and dehydroaustinol, two fungal meroterpenoids. The first step of the pathway is the synthesis of 3,5-dimethylorsellinic acid by the polyketide synthase ausA. 3,5-dimethylorsellinic acid is then prenylated by the polyprenyl transferase ausN. Further epoxidation by the FAD-dependent monooxygenase ausM and cyclization by the probable terpene cyclase ausL lead to the formation of protoaustinoid A. Protoaustinoid A is then oxidized to spiro-lactone preaustinoid A3 by the combined action of the FAD-binding monooxygenases ausB and ausC, and the dioxygenase ausE. Acid-catalyzed keto-rearrangement and ring contraction of the tetraketide portion of preaustinoid A3 by ausJ lead to the formation of preaustinoid A4. The aldo-keto reductase ausK, with the help of ausH, is involved in the next step by transforming preaustinoid A4 into isoaustinone which is in turn hydroxylated by the P450 monooxygenase ausI to form austinolide. Finally, the cytochrome P450 monooxygenase ausG modifies austinolide to austinol. Austinol can be further modified to dehydroaustinol which forms a diffusible complex with diorcinol that initiates conidiation. Due to genetic rearrangements of the clusters and the subsequent loss of some enzymes, the end products of the Emericella nidulans austinoid biosynthesis clusters are austinol and dehydroaustinol, even if additional enzymes, such as the O-acetyltransferase ausQ and the cytochrome P450 monooxygenase ausR are still functional. This chain is Terpene cyclase ausL, found in Emericella nidulans (strain FGSC A4 / ATCC 38163 / CBS 112.46 / NRRL 194 / M139) (Aspergillus nidulans).